Here is a 1035-residue protein sequence, read N- to C-terminus: Valine--tRNA ligase (1035 aa).

The 'HIGH' region signature appears at 45–55 (PNVTGALHLGH). A coiled-coil region spans residues 253–281 (EKLSDANEKEAVDLNKQIEALQKRREERL). Residue Lys619 coordinates ATP. Residues 967 to 1035 (DVEAELARLE…QDILKLQSKK (69 aa)) adopt a coiled-coil conformation.

The protein belongs to the class-I aminoacyl-tRNA synthetase family. ValS type 1 subfamily. As to quaternary structure, monomer.

Its subcellular location is the cytoplasm. The catalysed reaction is tRNA(Val) + L-valine + ATP = L-valyl-tRNA(Val) + AMP + diphosphate. Catalyzes the attachment of valine to tRNA(Val). As ValRS can inadvertently accommodate and process structurally similar amino acids such as threonine, to avoid such errors, it has a 'posttransfer' editing activity that hydrolyzes mischarged Thr-tRNA(Val) in a tRNA-dependent manner. The sequence is that of Valine--tRNA ligase from Rhodopirellula baltica (strain DSM 10527 / NCIMB 13988 / SH1).